The primary structure comprises 1064 residues: Ribosome quality control complex subunit NEMF (1064 aa).

Thr-7 is subject to Phosphothreonine. Residues 296–359 (VDEFYSKIEG…LIEMNLQIVD (64 aa)) are a coiled coil. Position 417 is a phosphoserine (Ser-417). The segment at 420–451 (EDGDGDASIENSDAEAPKGKKKKQKNKQLQKP) is disordered. Basic residues predominate over residues 438-447 (GKKKKQKNKQ). A coiled-coil region spans residues 481–512 (AAKKTQRTVEAAEKAFKSAEKKTKQTLKEVQT). Positions 694-707 (EQLEGGDSSEEETE) are enriched in acidic residues. 2 disordered regions span residues 694 to 718 (EQLE…DVEL) and 731 to 973 (SGRD…SLTG). Residues 731–756 (SGRDELSSEDGEAKAVTKDQEPIGEM) show a composition bias toward basic and acidic residues. Ser-737 carries the post-translational modification Phosphoserine. The span at 771–781 (IDLSHLQSQRP) shows a compositional bias: polar residues. Residues 828-839 (IEEKDKERESAV) are compositionally biased toward basic and acidic residues. A coiled-coil region spans residues 858-882 (KRGQKSKMKKMKEKYKDQDDEDREL). A compositionally biased stretch (basic residues) spans 859–870 (RGQKSKMKKMKE). Basic and acidic residues predominate over residues 947–959 (DDPHDDKEEHDLD). Positions 960-973 (QQGNEENLFDSLTG) are enriched in polar residues.

This sequence belongs to the NEMF family. Component of the ribosome quality control complex (RQC), composed of the E3 ubiquitin ligase LTN1, TCF25 and NEMF associated with the 60S ribosomal subunit. The complex probably also contains VCP/p97 and its ubiquitin-binding cofactors. Interacts (via its N-terminus) with XPO1.

The protein resides in the cytoplasm. Its subcellular location is the cytosol. It is found in the nucleus. Key component of the ribosome quality control complex (RQC), a ribosome-associated complex that mediates the extraction of incompletely synthesized nascent chains from stalled ribosomes as well as their ubiquitin-mediated proteasomal degradation. Thereby, frees 60S subunit ribosomes from the stalled translation complex and prevents the accumulation of nascent polypeptide chains that are potentially toxic for the cell. Within the RQC complex, NEMF specifically binds stalled 60S ribosomal subunits by recognizing an exposed, nascent chain-conjugated tRNA moiety and promotes the recruitment of LTN1 to stalled 60S subunits. Following binding to stalled 60S ribosomal subunits, NEMF mediates CAT tailing by recruiting alanine-charged tRNA to the A-site and directing the elongation of stalled nascent chains independently of mRNA or 40S subunits, leading to non-templated C-terminal alanine extensions (CAT tails). Mainly recruits alanine-charged tRNAs, but can also other amino acid-charged tRNAs. CAT tailing is required to promote ubiquitination of stalled nascent chains by different E3 ubiquitin-protein ligases. In the canonical RQC pathway (RQC-L), CAT tailing facilitates LTN1-dependent ubiquitination by exposing lysine residues that would otherwise remain buried in the ribosomal exit tunnel. In the alternative RQC pathway (RQC-C) CAT tailing creates an C-degron mainly composed of alanine that is recognized by the CRL2(KLHDC10) and RCHY1/PIRH2 E3 ligases, leading to ubiquitination and degradation of stalled nascent chains. NEMF may also indirectly play a role in nuclear export. The protein is Ribosome quality control complex subunit NEMF of Mus musculus (Mouse).